The sequence spans 146 residues: uncharacterized protein (146 aa).

Positions 34–135 constitute a Glutaredoxin domain; that stretch reads EDKIVNDVMT…PLLEKAHALF (102 aa). Cys-54 contacts [2Fe-2S] cluster.

This sequence belongs to the glutaredoxin family. Monothiol subfamily.

This is an uncharacterized protein from Caenorhabditis elegans.